The chain runs to 141 residues: Nucleoside diphosphate kinase (141 aa).

Residues lysine 11, phenylalanine 59, arginine 87, threonine 93, arginine 104, and asparagine 114 each coordinate ATP. Histidine 117 acts as the Pros-phosphohistidine intermediate in catalysis.

Belongs to the NDK family. Homotetramer. Mg(2+) is required as a cofactor.

It localises to the cytoplasm. It catalyses the reaction a 2'-deoxyribonucleoside 5'-diphosphate + ATP = a 2'-deoxyribonucleoside 5'-triphosphate + ADP. It carries out the reaction a ribonucleoside 5'-diphosphate + ATP = a ribonucleoside 5'-triphosphate + ADP. Major role in the synthesis of nucleoside triphosphates other than ATP. The ATP gamma phosphate is transferred to the NDP beta phosphate via a ping-pong mechanism, using a phosphorylated active-site intermediate. This is Nucleoside diphosphate kinase from Verminephrobacter eiseniae (strain EF01-2).